The following is a 547-amino-acid chain: Chaperonin GroEL (547 aa).

Residues 30–33 (TLGP), Lys51, 87–91 (DGTTT), Gly415, and Asp495 contribute to the ATP site. The segment at 525–547 (PDEKEAGGGAPDMGGMGGMGGMM) is disordered. Residues 531–547 (GGGAPDMGGMGGMGGMM) show a composition bias toward gly residues.

This sequence belongs to the chaperonin (HSP60) family. In terms of assembly, forms a cylinder of 14 subunits composed of two heptameric rings stacked back-to-back. Interacts with the co-chaperonin GroES.

The protein resides in the cytoplasm. It carries out the reaction ATP + H2O + a folded polypeptide = ADP + phosphate + an unfolded polypeptide.. Functionally, together with its co-chaperonin GroES, plays an essential role in assisting protein folding. The GroEL-GroES system forms a nano-cage that allows encapsulation of the non-native substrate proteins and provides a physical environment optimized to promote and accelerate protein folding. In Chromohalobacter salexigens (strain ATCC BAA-138 / DSM 3043 / CIP 106854 / NCIMB 13768 / 1H11), this protein is Chaperonin GroEL.